The chain runs to 204 residues: MRRSWALSRQVSEARFPGKRWLVAGLGNHGMPGTRHSVGMAVLGQIARRLGVAENWTRDSRCAADLALAPLGDAQLVLLRPRRLMNVNGRSVARAAELFGLTAEEIYLVHDELDKPLGKLALKLGGSARGHNGVRSCISCLNSNAMPRLLVGIGRPTHPNMVENHVLGCFSPEEQELLSPLMDQATDLLLDHIRARSQGPLSGL.

His36 (proton acceptor) is an active-site residue. Asn86 and Asn132 together coordinate tRNA.

It belongs to the PTH family.

The catalysed reaction is an N-acyl-L-alpha-aminoacyl-tRNA + H2O = an N-acyl-L-amino acid + a tRNA + H(+). Peptidyl-tRNA hydrolase that cleaves nascent chains-tRNAs that are not stably fixed in the P-site of 60S ribosome-nascent chain complexes. Acts downstream of the ribosome-associated quality control (RQC) pathway to release non-ubiquitinated nascent chains from 60S and 80S ribosome-nascent chain complexes. Does not act on ubiquitinated nascent chains, which are cleaved by ANKZF1 for degradation. The polypeptide is Probable peptidyl-tRNA hydrolase (Mus musculus (Mouse)).